Reading from the N-terminus, the 179-residue chain is UPF0227 protein Sbal_2415 (179 aa).

The protein belongs to the UPF0227 family.

The polypeptide is UPF0227 protein Sbal_2415 (Shewanella baltica (strain OS155 / ATCC BAA-1091)).